Here is a 562-residue protein sequence, read N- to C-terminus: 2-succinyl-5-enolpyruvyl-6-hydroxy-3-cyclohexene-1-carboxylate synthase (562 aa).

Belongs to the TPP enzyme family. MenD subfamily. Homodimer. The cofactor is Mg(2+). Mn(2+) is required as a cofactor. Requires thiamine diphosphate as cofactor.

The catalysed reaction is isochorismate + 2-oxoglutarate + H(+) = 5-enolpyruvoyl-6-hydroxy-2-succinyl-cyclohex-3-ene-1-carboxylate + CO2. It functions in the pathway quinol/quinone metabolism; 1,4-dihydroxy-2-naphthoate biosynthesis; 1,4-dihydroxy-2-naphthoate from chorismate: step 2/7. The protein operates within cofactor biosynthesis; phylloquinone biosynthesis. Catalyzes the thiamine diphosphate-dependent decarboxylation of 2-oxoglutarate and the subsequent addition of the resulting succinic semialdehyde-thiamine pyrophosphate anion to isochorismate to yield 2-succinyl-5-enolpyruvyl-6-hydroxy-3-cyclohexene-1-carboxylate (SEPHCHC). In Thermosynechococcus vestitus (strain NIES-2133 / IAM M-273 / BP-1), this protein is 2-succinyl-5-enolpyruvyl-6-hydroxy-3-cyclohexene-1-carboxylate synthase.